The following is a 394-amino-acid chain: MAVLDLALQGLAIFGCVLFFVLWFMHFLSIVYTRLHLNKKISDKQPYSKLPGVSLLKPLKGVDPNLINNLETFFELDYPKFEILLCVQDLDDPAVDVCKKLLGKYPSDDAKLFIGGKKVGINPKINNLMPGYEVAKYDLIWICDSGIKVKPDTLTDMANQMTEKVGLVHGLPYVADRQGFAATLEQVYFGTSHPRSYISANVTGFKCVTGMSCLMRKEVLDQAGGLIAFAQYIAEDYFMAKAIADRGWKFSMATQVAMQNSGCYSISQFQSRMIRWAKLRINMLPATIICEPISECFVASLIIGWAAHHIFRWDIMVFFMCHCLAWFIFDYIQLRGVQGGPLNFSKLDYAVAWFIRESMTIYIFLSALWDPTISWRTGRFRLRCGGTAEEILDV.

The Lumenal portion of the chain corresponds to 1 to 10 (MAVLDLALQG). A helical transmembrane segment spans residues 11-32 (LAIFGCVLFFVLWFMHFLSIVY). At 33–195 (TRLHLNKKIS…QVYFGTSHPR (163 aa)) the chain is on the cytoplasmic side. Asp92 is a short sequence motif (D1). A short sequence motif (D2) is located at residue Asp144. The chain crosses the membrane as a helical span at residues 196-215 (SYISANVTGFKCVTGMSCLM). Over 216 to 287 (RKEVLDQAGG…KLRINMLPAT (72 aa)) the chain is Lumenal. Position 236 (Asp236) is a short sequence motif, D3. Catalysis depends on Asp236, which acts as the Proton acceptor. Residues 272 to 276 (RMIRW) carry the (Q/R)XXRW motif. Residues 288–304 (IICEPISECFVASLIIG) traverse the membrane as a helical segment. At 305–309 (WAAHH) the chain is on the cytoplasmic side. The chain crosses the membrane as a helical span at residues 310–328 (IFRWDIMVFFMCHCLAWFI). Over 329–348 (FDYIQLRGVQGGPLNFSKLD) the chain is Lumenal. A helical transmembrane segment spans residues 349-369 (YAVAWFIRESMTIYIFLSALW). The Cytoplasmic portion of the chain corresponds to 370–394 (DPTISWRTGRFRLRCGGTAEEILDV).

This sequence belongs to the glycosyltransferase 2 family. At the late gastrula stage, weakly expressed ubiquitously. As neurulation proceeds (stages 15-16), expression moves towards the dorsal structures: involuted paraxial mesoderm and neural folds. In the tailbud embryo (stage 28), expression is restricted to the notochord. At later stages (stage 35), expression remains in the notochord and also appears weakly in the cephalic region.

It localises to the golgi apparatus membrane. It carries out the reaction an N-acylsphing-4-enine + UDP-alpha-D-glucose = a beta-D-glucosyl-(1&lt;-&gt;1')-N-acylsphing-4-enine + UDP + H(+). The catalysed reaction is UDP-alpha-D-xylose + an N-acylsphing-4-enine = a beta-D-xylosyl-(1&lt;-&gt;1')-N-acylsphing-4-enine + UDP + H(+). The enzyme catalyses N-(9Z-octadecenoyl)-sphing-4-enine + UDP-alpha-D-xylose = beta-D-xylosyl-(1&lt;-&gt;1')-N-(9Z-octadecenoyl)-sphing-4-enine + UDP + H(+). It functions in the pathway lipid metabolism; sphingolipid metabolism. Participates in the initial step of the glucosylceramide-based glycosphingolipid/GSL synthetic pathway at the cytosolic surface of the Golgi. Catalyzes the transfer of glucose from UDP-glucose to ceramide to produce glucosylceramide/GlcCer (such as beta-D-glucosyl-(1&lt;-&gt;1')-N-acylsphing-4-enine). Glucosylceramide is the core component of glycosphingolipids/GSLs, amphipathic molecules consisting of a ceramide lipid moiety embedded in the outer leaflet of the membrane, linked to one of hundreds of different externally oriented oligosaccharide structures. Glycosphingolipids are essential components of membrane microdomains that mediate membrane trafficking and signal transduction. They are implicated in many fundamental cellular processes, including growth, differentiation, migration, morphogenesis, cell-to-cell and cell-to-matrix interactions. Glycosphingolipids are required for convergence extension movements during early development. Catalyzes the synthesis of xylosylceramide/XylCer (such as beta-D-xylosyl-(1&lt;-&gt;1')-N-acylsphing-4-enine) using UDP-Xyl as xylose donor. The polypeptide is Ceramide glucosyltransferase-A (ugcg-a) (Xenopus laevis (African clawed frog)).